Reading from the N-terminus, the 260-residue chain is Neurotrophin-3 (260 aa).

The signal sequence occupies residues Met-1–Ala-18. A propeptide spanning residues Thr-19–Arg-141 is cleaved from the precursor. N-linked (GlcNAc...) asparagine glycosylation occurs at Asn-134. 3 cysteine pairs are disulfide-bonded: Cys-155–Cys-220, Cys-198–Cys-249, and Cys-208–Cys-251.

The protein belongs to the NGF-beta family.

Its subcellular location is the secreted. Its function is as follows. Seems to promote the survival of visceral and proprioceptive sensory neurons. This Xenopus laevis (African clawed frog) protein is Neurotrophin-3 (ntf3).